The following is a 333-amino-acid chain: E3 ubiquitin-protein ligase MIR1 (333 aa).

The segment at 1–60 adopts an RING-CH-type zinc-finger fold; sequence MEDEDVPVCWICNEELGNERFRACGCTGELENVHRSCLSTWLTISRNTACQICGVVYNTR. Topologically, residues 1-82 are cytoplasmic; sequence MEDEDVPVCW…PRLTYQEGLE (82 aa). Zn(2+)-binding residues include C9, C12, C24, C26, H34, C37, C50, and C53. The chain crosses the membrane as a helical span at residues 83 to 103; that stretch reads LIVFIFIMTLGAAGLAAATWV. Over 104-121 the chain is Extracellular; that stretch reads WLYIVGGHDPEIDHVAAA. The chain crosses the membrane as a helical span at residues 122-142; the sequence is AYYVFFVFYQLFVVFGLGAFF. Residues 143-333 lie on the Cytoplasmic side of the membrane; sequence HMMRHVGRAY…SAVSSALMFH (191 aa). The disordered stretch occupies residues 187–257; sequence GDNQDEEGPA…GRDDNVEPTA (71 aa). Positions 195-221 are enriched in low complexity; it reads PAGAAPGDQNGPAGAAPGDQDGPADGA. Positions 235–252 are enriched in basic and acidic residues; sequence AGYKEAGEPTHNDGRDDN.

As to quaternary structure, binds human MHC-I and CD1D.

It is found in the host cell membrane. It localises to the host endoplasmic reticulum. It carries out the reaction [E2 ubiquitin-conjugating enzyme]-S-ubiquitinyl-L-cysteine + [acceptor protein]-L-cysteine = [E2 ubiquitin-conjugating enzyme]-L-cysteine + [acceptor protein]-S-ubiquitinyl-L-cysteine.. Its pathway is protein modification; protein ubiquitination. In terms of biological role, membrane-bound E3 ubiquitin ligase expressed during late stages of lytic replication to mediate polyubiquitination of various host membrane proteins related to the immune response. Promotes ubiquitination and subsequent degradation of host MHC-I and CD1D molecules, DC-SIGN and DC-SIGNR, presumably to prevent lysis of infected cells by cytotoxic T-lymphocytes. Binds target molecules through transmembrane interaction. E3 ubiquitin-protein ligases accept ubiquitin from specific E2 ubiquitin-conjugating enzymes, and then transfer it to target protein. The result of this ubiquitination is the enhancement of the endocytosis of the target chain and the delivery to the lysosome, where it is proteolytically destroyed. Induces ubiquitination not only on lysines, but also on cysteine residues. This Human herpesvirus 8 type P (isolate GK18) (HHV-8) protein is E3 ubiquitin-protein ligase MIR1 (K3).